Reading from the N-terminus, the 506-residue chain is Hexokinase-6 (506 aa).

A helical transmembrane segment spans residues 6–26; that stretch reads VVGTAVVVCAAAAAAVGVAVV. The region spanning 43–497 is the Hexokinase domain; the sequence is RRAAAVIEEV…SGIGAALLAA (455 aa). Positions 98-236 are hexokinase small subdomain; sequence TGDEHGLFYA…GLDMKVTALV (139 aa). ADP contacts are provided by glycine 112, threonine 113, and asparagine 114. D-glucose is bound by residues threonine 202, lysine 203, asparagine 237, and aspartate 238. The tract at residues 237-486 is hexokinase large subdomain; the sequence is NDTVGTLAGG…SSVVVKLAND (250 aa). Residue threonine 261 participates in ADP binding. Positions 264, 292, and 323 each coordinate D-glucose. Glycine 451 is an ADP binding site.

Belongs to the hexokinase family. As to expression, expressed in roots, leaves, flowers, immature seeds and endosperm.

It is found in the plastid. The protein resides in the chloroplast outer membrane. The enzyme catalyses a D-hexose + ATP = a D-hexose 6-phosphate + ADP + H(+). It catalyses the reaction D-fructose + ATP = D-fructose 6-phosphate + ADP + H(+). The catalysed reaction is D-glucose + ATP = D-glucose 6-phosphate + ADP + H(+). Its pathway is carbohydrate metabolism; hexose metabolism. It participates in carbohydrate degradation; glycolysis; D-glyceraldehyde 3-phosphate and glycerone phosphate from D-glucose: step 1/4. Fructose and glucose phosphorylating enzyme. Functions as a glucose sensor for plant growth and photosynthesis. This chain is Hexokinase-6 (HXK6), found in Oryza sativa subsp. japonica (Rice).